The sequence spans 491 residues: Ketol-acid reductoisomerase (NADP(+)) (491 aa).

The KARI N-terminal Rossmann domain occupies 15–208 (AQLGKCRFMG…GGHRAGVLES (194 aa)). Residues 45–48 (CGAQ), Arg68, Arg76, Ser78, and 108–110 (DKQ) contribute to the NADP(+) site. The active site involves His132. NADP(+) is bound at residue Gly158. KARI C-terminal knotted domains follow at residues 209-344 (SFVA…TAPQ) and 345-484 (YEGK…MTDM). Mg(2+)-binding residues include Asp217, Glu221, Glu389, and Glu393. Ser414 provides a ligand contact to substrate.

The protein belongs to the ketol-acid reductoisomerase family. Mg(2+) serves as cofactor.

The enzyme catalyses (2R)-2,3-dihydroxy-3-methylbutanoate + NADP(+) = (2S)-2-acetolactate + NADPH + H(+). It catalyses the reaction (2R,3R)-2,3-dihydroxy-3-methylpentanoate + NADP(+) = (S)-2-ethyl-2-hydroxy-3-oxobutanoate + NADPH + H(+). It participates in amino-acid biosynthesis; L-isoleucine biosynthesis; L-isoleucine from 2-oxobutanoate: step 2/4. It functions in the pathway amino-acid biosynthesis; L-valine biosynthesis; L-valine from pyruvate: step 2/4. In terms of biological role, involved in the biosynthesis of branched-chain amino acids (BCAA). Catalyzes an alkyl-migration followed by a ketol-acid reduction of (S)-2-acetolactate (S2AL) to yield (R)-2,3-dihydroxy-isovalerate. In the isomerase reaction, S2AL is rearranged via a Mg-dependent methyl migration to produce 3-hydroxy-3-methyl-2-ketobutyrate (HMKB). In the reductase reaction, this 2-ketoacid undergoes a metal-dependent reduction by NADPH to yield (R)-2,3-dihydroxy-isovalerate. The protein is Ketol-acid reductoisomerase (NADP(+)) of Escherichia coli (strain UTI89 / UPEC).